The chain runs to 378 residues: Queuine tRNA-ribosyltransferase (378 aa).

D89 acts as the Proton acceptor in catalysis. Substrate-binding positions include 89 to 93, D143, Q194, and G221; that span reads DSGGF. The interval 252–258 is RNA binding; it reads GVGTPAN. D271 (nucleophile) is an active-site residue. The interval 276–280 is RNA binding; important for wobble base 34 recognition; that stretch reads ARNGR. C309, C311, C314, and H340 together coordinate Zn(2+).

Belongs to the queuine tRNA-ribosyltransferase family. Homodimer. Within each dimer, one monomer is responsible for RNA recognition and catalysis, while the other monomer binds to the replacement base PreQ1. The cofactor is Zn(2+).

The enzyme catalyses 7-aminomethyl-7-carbaguanine + guanosine(34) in tRNA = 7-aminomethyl-7-carbaguanosine(34) in tRNA + guanine. The protein operates within tRNA modification; tRNA-queuosine biosynthesis. Catalyzes the base-exchange of a guanine (G) residue with the queuine precursor 7-aminomethyl-7-deazaguanine (PreQ1) at position 34 (anticodon wobble position) in tRNAs with GU(N) anticodons (tRNA-Asp, -Asn, -His and -Tyr). Catalysis occurs through a double-displacement mechanism. The nucleophile active site attacks the C1' of nucleotide 34 to detach the guanine base from the RNA, forming a covalent enzyme-RNA intermediate. The proton acceptor active site deprotonates the incoming PreQ1, allowing a nucleophilic attack on the C1' of the ribose to form the product. After dissociation, two additional enzymatic reactions on the tRNA convert PreQ1 to queuine (Q), resulting in the hypermodified nucleoside queuosine (7-(((4,5-cis-dihydroxy-2-cyclopenten-1-yl)amino)methyl)-7-deazaguanosine). This chain is Queuine tRNA-ribosyltransferase, found in Lachnoclostridium phytofermentans (strain ATCC 700394 / DSM 18823 / ISDg) (Clostridium phytofermentans).